Reading from the N-terminus, the 88-residue chain is Mitochondrial import inner membrane translocase subunit TIM8 (88 aa).

The Twin CX3C motif motif lies at 44 to 70 (CFKKCNKDKPITSATLDGQEEACLKNC). 2 disulfides stabilise this stretch: C44–C70 and C48–C66.

This sequence belongs to the small Tim family. Heterohexamer; composed of 3 copies of TIM8 and 3 copies of TIM13, named soluble 70 kDa complex. Associates with the TIM22 complex, whose core is composed of TIM22 and TIM54. Interacts with the transmembrane regions of multi-pass transmembrane proteins in transit.

Its subcellular location is the mitochondrion inner membrane. Its function is as follows. Mitochondrial intermembrane chaperone that participates in the import and insertion of some multi-pass transmembrane proteins into the mitochondrial inner membrane. Also required for the transfer of beta-barrel precursors from the TOM complex to the sorting and assembly machinery (SAM complex) of the outer membrane. Acts as a chaperone-like protein that protects the hydrophobic precursors from aggregation and guide them through the mitochondrial intermembrane space. The TIM8-TIM13 complex is non essential and only mediates the import of few proteins, while the predominant TIM9-TIM10 70 kDa complex is crucial and mediates the import of much more proteins. This is Mitochondrial import inner membrane translocase subunit TIM8 (TIM8) from Candida albicans (strain SC5314 / ATCC MYA-2876) (Yeast).